Here is a 513-residue protein sequence, read N- to C-terminus: Dentin matrix acidic phosphoprotein 1 (513 aa).

An N-terminal signal peptide occupies residues 1-16; it reads MKISILLMFLWGLSCA. The disordered stretch occupies residues 23 to 513; it reads QNNESEDSEE…QDDNDCQDGY (491 aa). The N-linked (GlcNAc...) asparagine glycan is linked to Asn25. A compositionally biased stretch (low complexity) spans 46-60; it reads ESSESSEGSKVSSEE. The span at 101–119 shows a compositional bias: acidic residues; it reads DKDDDEDDSGDDTFGDDDS. Over residues 143–162 the composition is skewed to polar residues; it reads TIQASEESAPQGQDSAQDTT. Residues 163 to 180 show a composition bias toward basic and acidic residues; sequence SESRELDNEDRVDSKPEG. Acidic residues predominate over residues 208–220; sequence SELDDEGMQSDDP. Residues 245–257 show a composition bias toward polar residues; that stretch reads NSEQANTQDSGGS. Acidic residues predominate over residues 275–287; sequence EEDDRSELDDNNT. Residue Asn285 is glycosylated (N-linked (GlcNAc...) asparagine). Positions 296–307 are enriched in polar residues; it reads TENSNSRDTGLS. A compositionally biased stretch (basic and acidic residues) spans 309–325; it reads PRRDSKGDSQEDSKENL. Asn324, Asn345, and Asn351 each carry an N-linked (GlcNAc...) asparagine glycan. A compositionally biased stretch (low complexity) spans 337-354; the sequence is SSESSQEANLSSQENSSE. The Cell attachment site motif lies at 364–366; that stretch reads RGD. Residues 376 to 386 show a composition bias toward acidic residues; that stretch reads EDQEDSDSSEE. Asn413 and Asn426 each carry an N-linked (GlcNAc...) asparagine glycan. The span at 417–426 shows a compositional bias: acidic residues; sequence ESPESPEDEN. A compositionally biased stretch (low complexity) spans 427–442; that stretch reads SSSQEGLQSHSSSAES. N-linked (GlcNAc...) asparagine glycosylation occurs at Asn467. Over residues 484–502 the composition is skewed to basic and acidic residues; the sequence is IEIESRKLTVDAYHNKPIG. Over residues 503 to 513 the composition is skewed to acidic residues; it reads DQDDNDCQDGY.

As to quaternary structure, interacts with importin alpha. Phosphorylated in the cytosol and extracellular matrix and unphosphorylated in the nucleus. Phosphorylation is necessary for nucleocytoplasmic transport and may be catalyzed by a nuclear isoform of CK2 and can be augmented by calcium. Phosphorylated (in vitro) by FAM20C in the extracellular medium at sites within the S-x-E/pS motif. As to expression, expressed in tooth particularly in odontoblast, ameloblast and cementoblast.

It is found in the nucleus. It localises to the cytoplasm. The protein localises to the secreted. Its subcellular location is the extracellular space. The protein resides in the extracellular matrix. In terms of biological role, may have a dual function during osteoblast differentiation. In the nucleus of undifferentiated osteoblasts, unphosphorylated form acts as a transcriptional component for activation of osteoblast-specific genes like osteocalcin. During the osteoblast to osteocyte transition phase it is phosphorylated and exported into the extracellular matrix, where it regulates nucleation of hydroxyapatite. The polypeptide is Dentin matrix acidic phosphoprotein 1 (DMP1) (Homo sapiens (Human)).